The following is a 180-amino-acid chain: MASTISAYKEKMKELSVLSLICSCFYSQPHPNTVYQYGDMEVKQLDKRASGQSFEVILKSPSDLSPESPMLSSPPKRKDTSLEELQKRLEAAEERRKTQEAQVLKQLAERREHEREVLHKALEENNNFSRLAEEKLNYKMELSKEIREAHLAALRERLREKELHAAEVRRNKEQREEMSG.

2 S-palmitoyl cysteine lipidation sites follow: C22 and C24. Residues 38–180 (GDMEVKQLDK…NKEQREEMSG (143 aa)) form the SLD domain. Phosphoserine occurs at positions 50, 60, 65, 68, 72, 73, and 81. The tract at residues 58–82 (LKSPSDLSPESPMLSSPPKRKDTSL) is disordered. Over residues 60-74 (SPSDLSPESPMLSSP) the composition is skewed to low complexity. The stretch at 76 to 179 (KRKDTSLEEL…RNKEQREEMS (104 aa)) forms a coiled coil.

It belongs to the stathmin family. Interacts with STAT3. Interacts with CLU (secreted form); this interaction may act as an important modulator during neuronal differentiation. In terms of processing, N-terminal palmitoylation promotes specific anchoring to the cytosolic leaflet of Golgi membranes and subsequent vesicular trafficking along dendrites and axons. Neuronal Stathmins are substrates for palmitoyltransferases ZDHHC3, ZDHHC7 and ZDHHC15.

Its subcellular location is the golgi apparatus. It is found in the cell projection. The protein localises to the growth cone. The protein resides in the axon. It localises to the cytoplasm. Its subcellular location is the cytosol. Exhibits microtubule-destabilizing activity, which is antagonized by STAT3. In Bos taurus (Bovine), this protein is Stathmin-3 (STMN3).